Here is a 300-residue protein sequence, read N- to C-terminus: tRNA dimethylallyltransferase (300 aa).

An ATP-binding site is contributed by 9-16; sequence GPTASGKS. Position 11-16 (11-16) interacts with substrate; the sequence is TASGKS. Residues 34 to 37 form an interaction with substrate tRNA region; it reads DSKQ.

The protein belongs to the IPP transferase family. As to quaternary structure, monomer. It depends on Mg(2+) as a cofactor.

It carries out the reaction adenosine(37) in tRNA + dimethylallyl diphosphate = N(6)-dimethylallyladenosine(37) in tRNA + diphosphate. Its function is as follows. Catalyzes the transfer of a dimethylallyl group onto the adenine at position 37 in tRNAs that read codons beginning with uridine, leading to the formation of N6-(dimethylallyl)adenosine (i(6)A). This is tRNA dimethylallyltransferase from Ehrlichia canis (strain Jake).